We begin with the raw amino-acid sequence, 331 residues long: Beta-ketoacyl-[acyl-carrier-protein] synthase III (331 aa).

Catalysis depends on residues C113 and H253. The interval 254 to 258 is ACP-binding; sequence QANTR. N283 is a catalytic residue.

This sequence belongs to the thiolase-like superfamily. FabH family. In terms of assembly, homodimer.

It is found in the cytoplasm. The enzyme catalyses malonyl-[ACP] + acetyl-CoA + H(+) = 3-oxobutanoyl-[ACP] + CO2 + CoA. Its pathway is lipid metabolism; fatty acid biosynthesis. Functionally, catalyzes the condensation reaction of fatty acid synthesis by the addition to an acyl acceptor of two carbons from malonyl-ACP. Catalyzes the first condensation reaction which initiates fatty acid synthesis and may therefore play a role in governing the total rate of fatty acid production. Possesses both acetoacetyl-ACP synthase and acetyl transacylase activities. Its substrate specificity determines the biosynthesis of branched-chain and/or straight-chain of fatty acids. The polypeptide is Beta-ketoacyl-[acyl-carrier-protein] synthase III (Desulfitobacterium hafniense (strain Y51)).